A 1092-amino-acid chain; its full sequence is DNA polymerase delta catalytic subunit (1092 aa).

The disordered stretch occupies residues 1–71 (MDGKRKFNGT…SRPPPPELDP (71 aa)). The Nuclear localization signal signature appears at 4-19 (KRKFNGTSNGHAKKPR). Zn(2+)-binding residues include cysteine 997, cysteine 1000, cysteine 1014, and cysteine 1017. The CysA-type zinc finger occupies 997–1017 (CLGCKSLMPKGYEQACLCPHC). [4Fe-4S] cluster contacts are provided by cysteine 1046, cysteine 1049, cysteine 1059, and cysteine 1064. Residues 1046–1064 (CQRCQESLHEEVICSNRDC) carry the CysB motif motif.

This sequence belongs to the DNA polymerase type-B family. Catalytic component of the DNA polymerase delta complex consisting of three subunits: the catalytic subunit PolD1 and two accessory subunits PolD2/Pol31 and PolD3/Pol32. Within the delta complex, interacts with both PolD2 and PolD3, and is able to interact with PolD2 in the absence of PolD3. Interacts with PCNA and PCNA2. [4Fe-4S] cluster is required as a cofactor. The cofactor is Mg(2+). Expressed in ovaries (at the protein level). Expressed in embryos (at the protein level).

The protein localises to the nucleus. The protein resides in the nucleoplasm. The enzyme catalyses DNA(n) + a 2'-deoxyribonucleoside 5'-triphosphate = DNA(n+1) + diphosphate. Its activity is regulated as follows. Inhibited by KCL. Also inhibited by carbonyldiphosphonate, aphidicolin and N-ethylmaleimide (NEM). As the catalytic component of the DNA polymerase delta complex, plays a crucial role in high fidelity genome replication, including lagging strand synthesis, DNA recombination and repair. Exhibits both DNA polymerase and 3'- to 5'-exonuclease activities. Required at the nucleus of rapidly dividing embryonic cells to activate genome replication during the earliest cell cycles. Likely to require the presence of accessory proteins PolD2 and PolD3 for full activity. This Drosophila melanogaster (Fruit fly) protein is DNA polymerase delta catalytic subunit.